The following is a 224-amino-acid chain: UPF0758 protein VV1_0825 (224 aa).

The tract at residues 1-20 (MSLKNLPSESMPREKLLQRG) is disordered. The MPN domain maps to 102–224 (ALTSPQHTKL…VVSFAERGWI (123 aa)). 3 residues coordinate Zn(2+): H173, H175, and D186. A JAMM motif motif is present at residues 173–186 (HNHPSGVAEPSQAD).

Belongs to the UPF0758 family.

This Vibrio vulnificus (strain CMCP6) protein is UPF0758 protein VV1_0825.